The following is a 1291-amino-acid chain: Tat-binding homolog 7 (1291 aa).

Residues 1–345 (MPRSDGFSPR…HNRGERERGR (345 aa)) form a disordered region. Residues 64–82 (RYYEEEYHEAISSEEDERR) are compositionally biased toward basic and acidic residues. Polar residues predominate over residues 88–99 (SSNSMTYRQQVM). Residues 226 to 257 (EEEEEGAEEDEQSGEKDPEEEEDDSSNAESSE) show a composition bias toward acidic residues. The span at 298–311 (NRHHRNRNGSRRRR) shows a compositional bias: basic residues. Residue 432 to 439 (GPPGTGKT) participates in ATP binding. In terms of domain architecture, Bromo spans 914–1022 (ALQRQMRLFF…DAIDDLIECE (109 aa)). The tract at residues 1110–1194 (KSEEGTSTST…MKDASKDSTP (85 aa)) is disordered. The segment covering 1128–1142 (NKKKLLKKKKGQKKS) has biased composition (basic residues). Over residues 1148–1164 (EEHDEDSTVEDAGEDTI) the composition is skewed to acidic residues. Basic and acidic residues predominate over residues 1168-1190 (LEIKKNQETPNSEHDIEMKDASK).

This sequence belongs to the AAA ATPase family.

Thought to form a complex that enhances transcription from repetitive DNA sequences by modulating chromatin structure. The sequence is that of Tat-binding homolog 7 (lex-1) from Caenorhabditis elegans.